A 234-amino-acid chain; its full sequence is MSDITAAQTTLQQAQHIVFMTGAGVSTPSGIPDYRSKNGLYTEHHNAEYYLSHAFLAEHPLEFYQYLQSNLYYPDAQPNVIHQKMAALTQQGRASVITQNIDNLYGVAKTAQLVEFHGNLYQVYCTKCGQHVDWHEYLKSPYHQTDHGYLRPNVVLYDEGIASANIERAVQYLQQADLVVICGTSFRVYPFAGLIDYRNPKAQVLAINAEPLQLPFAFTMVQQDAVDFFEGVQV.

Residues 1–234 form the Deacetylase sirtuin-type domain; that stretch reads MSDITAAQTT…AVDFFEGVQV (234 aa). The NAD(+) site is built by alanine 23, threonine 27, arginine 35, glutamine 99, isoleucine 101, aspartate 102, histidine 117, threonine 184, serine 185, asparagine 208, and valine 226. Positions 101 and 102 each coordinate nicotinamide. Histidine 117 functions as the Proton acceptor in the catalytic mechanism.

The protein belongs to the sirtuin family. Class U subfamily.

It localises to the cytoplasm. It catalyses the reaction N(6)-acetyl-L-lysyl-[protein] + NAD(+) + H2O = 2''-O-acetyl-ADP-D-ribose + nicotinamide + L-lysyl-[protein]. In terms of biological role, NAD-dependent protein deacetylase which modulates the activities of several enzymes which are inactive in their acetylated form. The protein is NAD-dependent protein deacetylase of Lactiplantibacillus plantarum (strain ATCC BAA-793 / NCIMB 8826 / WCFS1) (Lactobacillus plantarum).